The primary structure comprises 313 residues: Putative serine protease 29 (313 aa).

The span at 1 to 22 (MPTTPDPGSEPPARTPRPPPLT) shows a compositional bias: pro residues. The tract at residues 1–27 (MPTTPDPGSEPPARTPRPPPLTPGLSP) is disordered. Residues 68–310 (IVGGHNAPPG…YVPWILQQVG (243 aa)) form the Peptidase S1 domain. A disulfide bridge connects residues C99 and C115. The Charge relay system role is filled by H114. A glycan (N-linked (GlcNAc...) asparagine) is linked at N143. Catalysis depends on D161, which acts as the Charge relay system. Intrachain disulfides connect C193-C268, C226-C249, and C258-C286. Residue S262 is the Charge relay system of the active site.

Belongs to the peptidase S1 family.

The protein localises to the secreted. In Homo sapiens (Human), this protein is Putative serine protease 29 (PRSS29P).